A 689-amino-acid chain; its full sequence is UvrABC system protein C (689 aa).

The 80-residue stretch at 16–95 (TNPGVYRFRD…IKEFAPRFNI (80 aa)) folds into the GIY-YIG domain. The UVR domain maps to 208-243 (KPYIRELTRQMNEAAECMDFETAAARRDDVGALERV). Residues 316 to 337 (LAPAASGRRRTARHGSEDVVGQ) form a disordered region.

The protein belongs to the UvrC family. Interacts with UvrB in an incision complex.

It is found in the cytoplasm. Functionally, the UvrABC repair system catalyzes the recognition and processing of DNA lesions. UvrC both incises the 5' and 3' sides of the lesion. The N-terminal half is responsible for the 3' incision and the C-terminal half is responsible for the 5' incision. This chain is UvrABC system protein C, found in Kocuria rhizophila (strain ATCC 9341 / DSM 348 / NBRC 103217 / DC2201).